We begin with the raw amino-acid sequence, 174 residues long: Co-chaperone protein HscB homolog (174 aa).

Positions 2 to 74 (NYFELFKFSP…IRRAEHMLSL (73 aa)) constitute a J domain.

Belongs to the HscB family. As to quaternary structure, interacts with HscA and stimulates its ATPase activity.

Co-chaperone involved in the maturation of iron-sulfur cluster-containing proteins. Seems to help targeting proteins to be folded toward HscA. This chain is Co-chaperone protein HscB homolog, found in Shewanella sp. (strain ANA-3).